A 373-amino-acid polypeptide reads, in one-letter code: Glutamine synthetase (373 aa).

The residue at position 2 (Ala2) is an N-acetylalanine. The required for glutamine-induced ubiquitination by CRL4(CRBN) and proteasomal degradation stretch occupies residues 2 to 25 (ATSASSHLNKGIKQMYMNLPQGEK). Residues Lys11 and Lys14 each carry the N6-acetyllysine modification. A GS beta-grasp domain is found at 24 to 106 (EKIQLMYIWV…VFCEVFKYNR (83 aa)). At Tyr104 the chain carries Phosphotyrosine. A GS catalytic domain is found at 113–373 (LRHSCKRIMD…TGDEPFQYKN (261 aa)). Glu134 contributes to the ATP binding site. Residues Glu134, Glu136, Glu196, and Glu203 each contribute to the Mn(2+) site. An ATP-binding site is contributed by 203–208 (EFQIGP). Position 246 to 247 (246 to 247 (NW)) interacts with L-glutamate. A Mn(2+)-binding site is contributed by His253. Residues 255–257 (NFS), Arg319, and Arg324 each bind ATP. Arg319 contacts L-glutamate. 336-338 (YFE) contacts ADP. Glu338 lines the Mn(2+) pocket. Arg340 contacts L-glutamate. Ser343 is subject to Phosphoserine.

It belongs to the glutamine synthetase family. Decamer; composed of two pentamers. Interacts with PALMD. Interacts with RHOJ. Interacts with BEST2; this interaction tethers a fraction of GLUL to the membrane, causing a decrease of cytosolic glutamine synthase (GS) activity and inhibits the chloride channel activity of BEST2 by affecting the gating at the aperture in the absence of intracellular glutamate. Mg(2+) is required as a cofactor. It depends on Mn(2+) as a cofactor. In terms of processing, palmitoylated; undergoes autopalmitoylation. Acetylated by EP300/p300; acetylation is stimulated by increased glutamine levels and promotes ubiquitin-mediated proteasomal degradation. Post-translationally, ubiquitinated by ZNRF1. Ubiquitinated by the DCX (DDB1-CUL4-X-box) E3 ubiquitin-protein ligase complex called CRL4(CRBN), leading to proteasomal degradation. As to expression, in the adult liver, expression is restricted to a small population of hepatocytes which form only a small rim of one to three hepatocytes around the central veins. Expressed in lung microvascular endothelial cells.

It is found in the cytoplasm. Its subcellular location is the cytosol. The protein localises to the microsome. It localises to the mitochondrion. The protein resides in the cell membrane. The catalysed reaction is L-glutamate + NH4(+) + ATP = L-glutamine + ADP + phosphate + H(+). It carries out the reaction L-cysteinyl-[protein] + hexadecanoyl-CoA = S-hexadecanoyl-L-cysteinyl-[protein] + CoA. Its activity is regulated as follows. Glutamine synthetase activity is inhibited by methionine sulfoximine (MSO). Functionally, glutamine synthetase that catalyzes the ATP-dependent conversion of glutamate and ammonia to glutamine. Its role depends on tissue localization: in the brain, it regulates the levels of toxic ammonia and converts neurotoxic glutamate to harmless glutamine, whereas in the liver, it is one of the enzymes responsible for the removal of ammonia. Plays a key role in ammonium detoxification during erythropoiesis: the glutamine synthetase activity is required to remove ammonium generated by porphobilinogen deaminase (HMBS) during heme biosynthesis to prevent ammonium accumulation and oxidative stress. Essential for proliferation of fetal skin fibroblasts. Independently of its glutamine synthetase activity, required for endothelial cell migration during vascular development. Involved in angiogenesis by regulating membrane localization and activation of the GTPase RHOJ, possibly by promoting RHOJ palmitoylation. May act as a palmitoyltransferase for RHOJ: able to autopalmitoylate and then transfer the palmitoyl group to RHOJ. Plays a role in ribosomal 40S subunit biogenesis. Through the interaction with BEST2, inhibits BEST2 channel activity by affecting the gating at the aperture in the absence of intracellular L-glutamate, but sensitizes BEST2 to intracellular L-glutamate, which promotes the opening of BEST2 and thus relieves its inhibitory effect on BEST2. The sequence is that of Glutamine synthetase from Rattus norvegicus (Rat).